The sequence spans 494 residues: Putative bifunctional dihydrofolate reductase-thymidylate synthase (494 aa).

One can recognise a DHFR domain in the interval 1–167; the sequence is MGIGKDGTLP…IKHSFISFVR (167 aa). An NADP(+)-binding site is contributed by 2-8; sequence GIGKDGT. Aspartate 16 serves as a coordination point for substrate. NADP(+) contacts are provided by residues 40-42 and 61-64; these read RKT and LTRS. Residue isoleucine 103 participates in substrate binding. 104-111 contacts NADP(+); that stretch reads GGGEILRQ. Threonine 124 is a substrate binding site. The segment at 170 to 494 is thymidylate synthase; sequence KSIAEANDSS…HHKIEMKMAV (325 aa). Arginine 231 serves as a coordination point for dUMP. Residue cysteine 376 is part of the active site. Residues histidine 377, 395 to 399, asparagine 407, and 437 to 439 each bind dUMP; these read QRSAD and HVY.

This sequence in the N-terminal section; belongs to the dihydrofolate reductase family. In the C-terminal section; belongs to the thymidylate synthase family.

The enzyme catalyses (6S)-5,6,7,8-tetrahydrofolate + NADP(+) = 7,8-dihydrofolate + NADPH + H(+). It carries out the reaction dUMP + (6R)-5,10-methylene-5,6,7,8-tetrahydrofolate = 7,8-dihydrofolate + dTMP. The protein operates within cofactor biosynthesis; tetrahydrofolate biosynthesis; 5,6,7,8-tetrahydrofolate from 7,8-dihydrofolate: step 1/1. Functionally, bifunctional enzyme. Involved in de novo dTMP biosynthesis. Key enzyme in folate metabolism. Can play two different roles depending on the source of dihydrofolate: de novo synthesis of tetrahydrofolate or recycling of the dihydrofolate released as one of the end products of the TS catalyzed reaction. Catalyzes an essential reaction for de novo glycine and purine synthesis, DNA precursor synthesis, and for the conversion of dUMP to dTMP. This is Putative bifunctional dihydrofolate reductase-thymidylate synthase from Oryza sativa subsp. japonica (Rice).